The sequence spans 926 residues: LPS-assembly protein LptD (926 aa).

The N-terminal stretch at 1-22 is a signal peptide; it reads MALKSPAFRKKFPLLVTGSLLA. Positions 55 to 91 are disordered; sequence AAAVDLPPRPVHDTTSVSSNGTVTSQGTSSGEQSAGT. The span at 68–91 shows a compositional bias: low complexity; sequence TTSVSSNGTVTSQGTSSGEQSAGT.

This sequence belongs to the LptD family. As to quaternary structure, component of the lipopolysaccharide transport and assembly complex. Interacts with LptE and LptA.

Its subcellular location is the cell outer membrane. Its function is as follows. Together with LptE, is involved in the assembly of lipopolysaccharide (LPS) at the surface of the outer membrane. This chain is LPS-assembly protein LptD, found in Pseudomonas syringae pv. syringae (strain B728a).